Reading from the N-terminus, the 694-residue chain is Elongation factor G (694 aa).

Positions 11–285 constitute a tr-type G domain; sequence KDYRNIGIMA…AVIDYLPSPL (275 aa). GTP is bound by residues 20–27, 84–88, and 138–141; these read AHIDAGKT, DTPGH, and NKMD.

It belongs to the TRAFAC class translation factor GTPase superfamily. Classic translation factor GTPase family. EF-G/EF-2 subfamily.

Its subcellular location is the cytoplasm. Catalyzes the GTP-dependent ribosomal translocation step during translation elongation. During this step, the ribosome changes from the pre-translocational (PRE) to the post-translocational (POST) state as the newly formed A-site-bound peptidyl-tRNA and P-site-bound deacylated tRNA move to the P and E sites, respectively. Catalyzes the coordinated movement of the two tRNA molecules, the mRNA and conformational changes in the ribosome. This Mycoplasma mobile (strain ATCC 43663 / 163K / NCTC 11711) (Mesomycoplasma mobile) protein is Elongation factor G.